Reading from the N-terminus, the 250-residue chain is Ribosomal RNA small subunit methyltransferase J (250 aa).

S-adenosyl-L-methionine contacts are provided by residues 101-102, 117-118, 153-154, and D171; these read RD, ER, and SS.

It belongs to the methyltransferase superfamily. RsmJ family.

Its subcellular location is the cytoplasm. It carries out the reaction guanosine(1516) in 16S rRNA + S-adenosyl-L-methionine = N(2)-methylguanosine(1516) in 16S rRNA + S-adenosyl-L-homocysteine + H(+). Functionally, specifically methylates the guanosine in position 1516 of 16S rRNA. This Shigella flexneri serotype 5b (strain 8401) protein is Ribosomal RNA small subunit methyltransferase J.